Here is a 702-residue protein sequence, read N- to C-terminus: Epsin-1 (702 aa).

One can recognise an ENTH domain in the interval 10–142 (NFSKGYTDTQ…EDEHALKEAR (133 aa)). 2 stretches are compositionally biased toward basic and acidic residues: residues 136-160 (HALK…SSRF) and 183-192 (SRYDDDDRDH). The disordered stretch occupies residues 136-285 (HALKEARGDS…HQREREQQEQ (150 aa)). Positions 193–214 (RSRRRSRSRRPGRSRSRRRSRR) are enriched in basic residues. A phosphoserine mark is found at serine 212, serine 216, serine 218, and serine 223. UIM domains are found at residues 226-245 (ENDP…AEED) and 254-273 (DSEA…DEAR). Residues 230 to 248 (ELQRVIEESKRQAEEDAKR) are compositionally biased toward basic and acidic residues. Serine 255 bears the Phosphoserine mark. A compositionally biased stretch (basic and acidic residues) spans 266-283 (SKEEDEARQRHQREREQQ). At threonine 406 the chain carries Phosphothreonine. Disordered stretches follow at residues 504–589 (NHTG…RTGD) and 683–702 (PMQG…LIDL). Residues 514–534 (TGLQRQTTGYTGNNNPYSRPL) are compositionally biased toward polar residues. The span at 535 to 549 (QSQSTGILQQQQQQS) shows a compositional bias: low complexity. Residues 557 to 577 (KTGSNNPFAQFSNLPSQSTAP) are compositionally biased toward polar residues. The segment covering 683–695 (PMQGMQQQSMQPQ) has biased composition (low complexity).

This sequence belongs to the epsin family.

Its subcellular location is the cytoplasm. It localises to the membrane. Binds to membranes enriched in phosphatidylinositol 3,5-bisphosphate (PtdIns(3,5)P2) and phosphatidylinositol 4,5-bisphosphate (PtdIns(4,5)P2). Required for endocytosis and localization of actin. This chain is Epsin-1 (ent1), found in Schizosaccharomyces pombe (strain 972 / ATCC 24843) (Fission yeast).